Consider the following 189-residue polypeptide: Ribonuclease M5 2 (189 aa).

One can recognise a Toprim domain in the interval 8–91 (SQVIVAEGRD…VFLKRDEAVP (84 aa)). Mg(2+) is bound by residues E14, D60, and D62.

This sequence belongs to the ribonuclease M5 family. Mg(2+) serves as cofactor.

Its subcellular location is the cytoplasm. It catalyses the reaction Endonucleolytic cleavage of RNA, removing 21 and 42 nucleotides, respectively, from the 5'- and 3'-termini of a 5S-rRNA precursor.. Its function is as follows. Required for correct processing of both the 5' and 3' ends of 5S rRNA precursor. Cleaves both sides of a double-stranded region yielding mature 5S rRNA in one step. This chain is Ribonuclease M5 2, found in Ligilactobacillus salivarius (strain UCC118) (Lactobacillus salivarius).